The sequence spans 715 residues: Palmitoyltransferase ZDHHC5 (715 aa).

At Met1–Lys13 the chain is on the cytoplasmic side. The helical transmembrane segment at Tyr14–Phe34 threads the bilayer. Residues Thr35–Gly38 are Extracellular-facing. The chain crosses the membrane as a helical span at residues Leu39–Leu59. Residues Ala60–Tyr148 are Cytoplasmic-facing. Tyr91 bears the Phosphotyrosine mark. Positions Lys104 to Leu154 constitute a DHHC domain. The active-site S-palmitoyl cysteine intermediate is Cys134. The chain crosses the membrane as a helical span at residues Phe149–Leu169. Residues Tyr170 to Cys191 are Extracellular-facing. Residues Val192–Ala212 traverse the membrane as a helical segment. The Cytoplasmic segment spans residues Arg213 to Val715. A phosphoserine mark is found at Ser247, Ser296, and Ser299. Residues Gly289–Glu648 are disordered. Thr303 is subject to Phosphothreonine. At Ser345 the chain carries Phosphoserine. Phosphothreonine is present on residues Thr348 and Thr350. Residues Ser359–Ala373 are compositionally biased toward low complexity. Phosphoserine occurs at positions 380, 398, 406, and 409. Thr411 carries the phosphothreonine modification. 4 positions are modified to phosphoserine: Ser415, Ser425, Ser429, and Ser432. Low complexity predominate over residues Ser422–Ser432. A Phosphothreonine modification is found at Thr436. A compositionally biased stretch (polar residues) spans Gln442–Asp478. Phosphoserine is present on residues Ser529 and Ser554. Residue Arg617 is modified to Omega-N-methylarginine. Residue Ser621 is modified to Phosphoserine. A Phosphothreonine modification is found at Thr659. Residues Leu666–Val715 form a disordered region. Residues Thr668 to Ser679 show a composition bias toward polar residues. A compositionally biased stretch (low complexity) spans Gly681–Pro695. Ser684 and Ser694 each carry phosphoserine. Residue Arg697 is modified to Omega-N-methylarginine.

The protein belongs to the DHHC palmitoyltransferase family. ERF2/ZDHHC9 subfamily. In terms of processing, phosphorylation regulates association with endocytic proteins and its subcellular localization. Phosphorylation by LYN during fatty acid uptake leads to inactivation of the activity. Autopalmitoylated. Palmitoylation of the C-terminal tail regulates stimulation-dependent plasma membrane motility.

The protein resides in the cell membrane. The catalysed reaction is L-cysteinyl-[protein] + hexadecanoyl-CoA = S-hexadecanoyl-L-cysteinyl-[protein] + CoA. Its function is as follows. Palmitoyltransferase that catalyzes the addition of palmitate onto various protein substrates such as CTNND2, CD36, GSDMD, NLRP3, NOD1, NOD2, STAT3 and S1PR1 thus plays a role in various biological processes including cell adhesion, inflammation, fatty acid uptake, bacterial sensing or cardiac functions. Plays an important role in the regulation of synapse efficacy by mediating palmitoylation of delta-catenin/CTNND2, thereby increasing synaptic delivery and surface stabilization of alpha-amino-3-hydroxy-5-methyl-4-isoxazole propionic acid receptors (AMPARs). Under basal conditions, remains at the synaptic membrane through FYN-mediated phosphorylation that prevents association with endocytic proteins. Neuronal activity enhances the internalization and trafficking of DHHC5 from spines to dendritic shafts where it palmitoylates delta-catenin/CTNND2. Regulates cell adhesion at the plasma membrane by palmitoylating GOLGA7B and DSG2. Plays a role in innate immune response by mediating the palmitoylation of NOD1 and NOD2 and their proper recruitment to the bacterial entry site and phagosomes. Also participates in fatty acid uptake by palmitoylating CD36 and thereby targeting it to the plasma membrane. Upon binding of fatty acids to CD36, gets phosphorylated by LYN leading to inactivation and subsequent CD36 caveolar endocytosis. Controls oligodendrocyte development by catalyzing STAT3 palmitoylation. Acts as a regulator of inflammatory response by mediating palmitoylation of NLRP3 and GSDMD. Palmitoylates NLRP3 to promote inflammasome assembly and activation. Activates pyroptosis by catalyzing palmitoylation of gasdermin-D (GSDMD), thereby promoting membrane translocation and pore formation of GSDMD. The protein is Palmitoyltransferase ZDHHC5 (ZDHHC5) of Canis lupus familiaris (Dog).